A 290-amino-acid chain; its full sequence is 33 kDa chaperonin (290 aa).

Disulfide bonds link Cys-235/Cys-237 and Cys-268/Cys-271.

Belongs to the HSP33 family. In terms of processing, under oxidizing conditions two disulfide bonds are formed involving the reactive cysteines. Under reducing conditions zinc is bound to the reactive cysteines and the protein is inactive.

The protein localises to the cytoplasm. Its function is as follows. Redox regulated molecular chaperone. Protects both thermally unfolding and oxidatively damaged proteins from irreversible aggregation. Plays an important role in the bacterial defense system toward oxidative stress. This Streptococcus pyogenes serotype M12 (strain MGAS2096) protein is 33 kDa chaperonin.